Consider the following 399-residue polypeptide: Digeranylgeranylglycerophospholipid reductase (399 aa).

The FAD site is built by G15, E34, C45, A46, G48, R99, A123, D280, G292, and I293.

Belongs to the geranylgeranyl reductase family. DGGGPL reductase subfamily. Requires FAD as cofactor.

It carries out the reaction a 2,3-bis-O-phytanyl-sn-glycerol 1-phospholipid + 8 oxidized 2[4Fe-4S]-[ferredoxin] = a 2,3-bis-O-(geranylgeranyl)-sn-glycerol 1-phospholipid + 8 reduced 2[4Fe-4S]-[ferredoxin] + 16 H(+). The enzyme catalyses 2,3-bis-O-(phytanyl)-sn-glycerol 1-phosphate + 8 oxidized 2[4Fe-4S]-[ferredoxin] = 2,3-bis-O-(geranylgeranyl)-sn-glycerol 1-phosphate + 8 reduced 2[4Fe-4S]-[ferredoxin] + 16 H(+). The catalysed reaction is a 2,3-bis-O-phytanyl-sn-glycerol 1-phospholipid + 8 A = a 2,3-bis-O-(geranylgeranyl)-sn-glycerol 1-phospholipid + 8 AH2. It catalyses the reaction CDP-2,3-bis-O-(geranylgeranyl)-sn-glycerol + 8 AH2 = CDP-2,3-bis-O-(phytanyl)-sn-glycerol + 8 A. It carries out the reaction archaetidylserine + 8 AH2 = 2,3-bis-O-phytanyl-sn-glycero-3-phospho-L-serine + 8 A. It participates in membrane lipid metabolism; glycerophospholipid metabolism. Functionally, is involved in the reduction of 2,3-digeranylgeranylglycerophospholipids (unsaturated archaeols) into 2,3-diphytanylglycerophospholipids (saturated archaeols) in the biosynthesis of archaeal membrane lipids. Catalyzes the formation of archaetidic acid (2,3-di-O-phytanyl-sn-glyceryl phosphate) from 2,3-di-O-geranylgeranylglyceryl phosphate (DGGGP) via the hydrogenation of each double bond of the isoprenoid chains. Is also probably able to reduce double bonds of geranyl groups in CDP-2,3-bis-O-(geranylgeranyl)-sn-glycerol and archaetidylserine, thus acting at various stages in the biosynthesis of archaeal membrane lipids. The sequence is that of Digeranylgeranylglycerophospholipid reductase from Methanosphaerula palustris (strain ATCC BAA-1556 / DSM 19958 / E1-9c).